Here is a 280-residue protein sequence, read N- to C-terminus: Cobalt import ATP-binding protein CbiO (280 aa).

An ABC transporter domain is found at 2–236; sequence IEVRDLRFHY…GDWLRQQGLG (235 aa). Residue 36-43 participates in ATP binding; it reads GANGCGKT.

The protein belongs to the ABC transporter superfamily. Cobalt importer (TC 3.A.1.18.1) family. Forms an energy-coupling factor (ECF) transporter complex composed of an ATP-binding protein (A component, CbiO), a transmembrane protein (T component, CbiQ) and 2 possible substrate-capture proteins (S components, CbiM and CbiN) of unknown stoichimetry.

The protein localises to the cell inner membrane. The protein operates within cofactor biosynthesis; adenosylcobalamin biosynthesis. In terms of biological role, part of the energy-coupling factor (ECF) transporter complex CbiMNOQ involved in cobalt import. Presumably responsible for energy coupling to the transport system. The chain is Cobalt import ATP-binding protein CbiO from Syntrophus aciditrophicus (strain SB).